A 446-amino-acid polypeptide reads, in one-letter code: Packaging protein 1 (446 aa).

A disordered region spans residues 1–71; sequence MEEKAGLGRL…QPQASKPKKH (71 aa). Over residues 31–43 the composition is skewed to basic and acidic residues; that stretch reads FHSDRNHPNKEAE. Residue 170–177 participates in ATP binding; sequence GPTGCGKS. The DNA-binding stretch occupies residues 439–446; the sequence is RYYHSKKK.

The protein belongs to the adenoviridae packaging protein 1 family. In terms of assembly, homodimer. Part of a genome packaging complex composed of packaging proteins 1, 2 and 3; this complex specifically binds to the packaging sequence on the left end of viral genomic DNA and performs packaging of the viral genome. Interacts with protein 33K.

The protein resides in the virion. The protein localises to the host nucleus. Its subcellular location is the host nucleoplasm. It localises to the host nucleolus. Functionally, component of the packaging machinery which encapsidates the viral DNA into preformed capsids and transcriptional activator of the viral major late promoter (MLP). Binds, along with packaging proteins 2 and 3, to the specific packaging sequence on the left end of viral genomic DNA and displays ATPase activity thereby providing the power stroke of the packaging machinery. The activity of packaging protein IVa2 is stimulated by protein 33K which acts as a terminase. May be the protein that pumps DNA into the capsid powered by ATP hydrolysis. Specifically binds to the 5'-CG-3' nucleotides of the repeats making up the packaging sequence. Component of the DEF-A and DEF-B transcription factors that bind downstream elements of the major late promoter (MLP), and stimulate transcription from the MLP after initiation of viral DNA replication. DEF-A is a heterodimer packaging proteins 1 and 2 and DEF-B is a homodimer of packaging protein 1. The polypeptide is Packaging protein 1 (Canine adenovirus serotype 2 (strain Toronto A 26-61) (CAdV-2)).